We begin with the raw amino-acid sequence, 248 residues long: Pulmonary surfactant-associated protein A1 (248 aa).

The first 20 residues, 1 to 20 (MWLCPLALNLILMAASGAVC), serve as a signal peptide directing secretion. The 73-residue stretch at 28–100 (GSPGIPGTPG…PGERGPPGLP (73 aa)) folds into the Collagen-like domain. 4-hydroxyproline occurs at positions 30, 33, 36, 42, 54, 57, 63, 67, and 70. Positions 31–101 (GIPGTPGSHG…GERGPPGLPA (71 aa)) are disordered. The span at 42 to 51 (PGRDGRDGLK) shows a compositional bias: basic and acidic residues. Positions 54–70 (PGPPGPMGPPGEMPCPP) are enriched in pro residues. A C-type lectin domain is found at 132-248 (MTVGEKVFSS…LYSRLTICEF (117 aa)). 2 cysteine pairs are disulfide-bonded: Cys155–Cys246 and Cys224–Cys238. An N-linked (GlcNAc...) asparagine glycan is attached at Asn207.

The protein belongs to the SFTPA family. In terms of assembly, oligomeric complex of 6 set of homotrimers. Interacts with CD93. As to quaternary structure, (Microbial infection) Binds M.bovis cell surface protein Apa via its glycosylated sites; probably also recognizes other bacterial moieties. (Microbial infection) Binds to the S.aureus extracellular adherence protein, Eap, thereby enhancing phagocytosis and killing of S.aureus by alveolar macrophages. In terms of assembly, (Microbial infection) Interacts with M.pneumoniae CARDS toxin; CARDS probably uses this protein as a receptor. Post-translationally, N-acetylated.

It localises to the secreted. The protein localises to the extracellular space. It is found in the extracellular matrix. Its subcellular location is the surface film. In terms of biological role, in presence of calcium ions, it binds to surfactant phospholipids and contributes to lower the surface tension at the air-liquid interface in the alveoli of the mammalian lung and is essential for normal respiration. Enhances the expression of MYO18A/SP-R210 on alveolar macrophages. (Microbial infection) Recognition of M.tuberculosis by dendritic cells may occur partially via this molecule. Can recognize, bind, and opsonize pathogens to enhance their elimination by alveolar macrophages. Functionally, (Microbial infection) Binds M.pneumoniae CARDS toxin, serves as one receptor for this pathogen. When SFTPA1 is down-regulated by siRNA, less toxin binds to human cells and less vacuolization (a symptom of M.pneumoniae infection) is seen. The polypeptide is Pulmonary surfactant-associated protein A1 (SFTPA1) (Homo sapiens (Human)).